The chain runs to 632 residues: Cell pattern formation-associated protein stuA (632 aa).

The span at 1–20 (MNQTQSYMDVHTSHFSSPQP) shows a compositional bias: polar residues. The segment at 1–27 (MNQTQSYMDVHTSHFSSPQPYGSHGAT) is disordered. Positions 128-234 (RVTATLWEDE…HNIGGLLYHP (107 aa)) constitute an HTH APSES-type domain. The segment at residues 162–183 (GTKLLNVAGMTRGRRDGILKSE) is a DNA-binding region (H-T-H motif). Disordered regions lie at residues 246–315 (DSQQ…ASSL), 340–386 (QNVP…KSYY), 403–460 (AHSL…QQEP), and 473–632 (NRNS…MRRR). 4 stretches are compositionally biased toward polar residues: residues 254–264 (GSQTARTSQGP), 275–295 (MNGS…QTNG), 340–354 (QNVP…TRSM), and 364–376 (GNNL…YQNQ). The span at 377–386 (PAYDSSKSYY) shows a compositional bias: low complexity. The span at 428–438 (EQEHDEVKVDR) shows a compositional bias: basic and acidic residues. A compositionally biased stretch (polar residues) spans 473–506 (NRNSYTYTTNPSVSSLSGDHSQLGGSPSHQNGSD). Low complexity predominate over residues 558–576 (AYASNYSGYSSVNGSSMGS). Positions 578–604 (KRMRDDDDDHLSRSDGRENEYETKRRK) are nuclear localization domain. The span at 579–600 (RMRDDDDDHLSRSDGRENEYET) shows a compositional bias: basic and acidic residues.

This sequence belongs to the EFG1/PHD1/stuA family.

Its subcellular location is the nucleus. Its function is as follows. Transcription factor that regulates asexual reproduction. Binds the StuA-response elements (StRE) with the consensus sequence 5'-(A/T)CGCG(T/A)N(A/C)-3' at the promoters of target genes. Required for accurate spatial organization of the developing conidiophore. Primarily involved in the formation of the uninucleate sterigmata, which arise by budding in this multicellular structure. Required for metula and phialide formation during conidiation but is not required for dimorphic growth. This Talaromyces marneffei (Penicillium marneffei) protein is Cell pattern formation-associated protein stuA.